Here is a 322-residue protein sequence, read N- to C-terminus: tRNA U34 carboxymethyltransferase (322 aa).

Residues lysine 92, tryptophan 106, lysine 111, glycine 131, 153–155 (DPT), 181–182 (VE), methionine 196, tyrosine 200, and arginine 315 each bind carboxy-S-adenosyl-L-methionine.

The protein belongs to the class I-like SAM-binding methyltransferase superfamily. CmoB family. As to quaternary structure, homotetramer.

It catalyses the reaction carboxy-S-adenosyl-L-methionine + 5-hydroxyuridine(34) in tRNA = 5-carboxymethoxyuridine(34) in tRNA + S-adenosyl-L-homocysteine + H(+). Catalyzes carboxymethyl transfer from carboxy-S-adenosyl-L-methionine (Cx-SAM) to 5-hydroxyuridine (ho5U) to form 5-carboxymethoxyuridine (cmo5U) at position 34 in tRNAs. The protein is tRNA U34 carboxymethyltransferase of Colwellia psychrerythraea (strain 34H / ATCC BAA-681) (Vibrio psychroerythus).